Reading from the N-terminus, the 431-residue chain is MTKSSELYQKAQQTIPGGVNSPVRAFNGVGGSPLFIERADGALIFDADGRAYIDYVGSWGPMILGHNHAVIREAVIDAAQRGLSFGAPTEMEIAMAELVSELVPSMEQIRMVSSGTEATMSAIRLARGFTGRDKIMKFEGCYHGHADSLLVKAGSGALTLGQPSSPGVPADFAKHTLTATFNDLDSVRELFAANKGEIACIIVEPVAGNMNCIPPVEGFHEGLREICDQEGALLIFDEVMTGFRVALGGAQAHYNIKPDLTTLGKVIGGGMPVGAFGGRKEVMQYVAPTGPVYQAGTLSGNPVAMAAGFACLNLLKEEGNEKRLASKTKQLADGFKSLAEKHGIPLVVNQVGGMFGFFFTDQETVTCYEDVTKCDIERFKRFFHLMLDHGVYLAPSAFEASFTSLAHGSKEIDATLEAADRCFAIIAAEAK.

N6-(pyridoxal phosphate)lysine is present on Lys-265.

It belongs to the class-III pyridoxal-phosphate-dependent aminotransferase family. HemL subfamily. In terms of assembly, homodimer. Requires pyridoxal 5'-phosphate as cofactor.

The protein localises to the cytoplasm. It catalyses the reaction (S)-4-amino-5-oxopentanoate = 5-aminolevulinate. It functions in the pathway porphyrin-containing compound metabolism; protoporphyrin-IX biosynthesis; 5-aminolevulinate from L-glutamyl-tRNA(Glu): step 2/2. This is Glutamate-1-semialdehyde 2,1-aminomutase from Vibrio parahaemolyticus serotype O3:K6 (strain RIMD 2210633).